The primary structure comprises 200 residues: Putative AgrB-like protein (200 aa).

5 helical membrane-spanning segments follow: residues 49–69 (LIITIILALLLHELVPVLVFM), 88–108 (LLCTILTAVTFVGVPYLIQFT), 114–134 (LFRFILCLLLTVPIGMFSPAV), 148–168 (ALKHKAIITSLVFSFLQFLVS), and 171–191 (LGTIIVVSLLLVFTLIVPLKG).

The protein belongs to the AgrB family.

The protein localises to the cell membrane. Functionally, may be involved in the proteolytic processing of a quorum sensing system signal molecule precursor. This is Putative AgrB-like protein from Lactiplantibacillus plantarum (strain ATCC BAA-793 / NCIMB 8826 / WCFS1) (Lactobacillus plantarum).